The primary structure comprises 88 residues: MGTARFLSAVLLLSVLLMVTFPALLSAEYHDGRVDICSLPSDSGDCLRFFEMWYFDGTTCTKFVYGGYGGNDNRFPTEKACMKRCAKA.

An N-terminal signal peptide occupies residues 1-27; that stretch reads MGTARFLSAVLLLSVLLMVTFPALLSA. A propeptide spanning residues 28-33 is cleaved from the precursor; that stretch reads EYHDGR. A BPTI/Kunitz inhibitor domain is found at 37-85; that stretch reads CSLPSDSGDCLRFFEMWYFDGTTCTKFVYGGYGGNDNRFPTEKACMKRC. Cystine bridges form between C37/C85 and C60/C81.

Belongs to the venom Kunitz-type family. 03 (sub-Kunitz) subfamily. Expressed by the venom gland.

The protein localises to the secreted. Serine protease inhibitor that inhibits trypsin at a molar ratio of 1:1. This is Kunitz-type U15-theraphotoxin-Hs1a from Cyriopagopus schmidti (Chinese bird spider).